A 577-amino-acid chain; its full sequence is Eukaryotic translation initiation factor 3 subunit D (577 aa).

The segment at 103–177 is disordered; that stretch reads DSTKTRFGRG…KDYDKPQRNR (75 aa). Residues 166–177 show a composition bias toward basic and acidic residues; sequence GWKDYDKPQRNR. The segment at 305-319 is RNA gate; that stretch reads TLDMVTVNENAADAP. Residues 558-577 are disordered; it reads GSFEDDGEGDVIEENVEEED. The segment covering 560 to 577 has biased composition (acidic residues); sequence FEDDGEGDVIEENVEEED.

This sequence belongs to the eIF-3 subunit D family. Component of the eukaryotic translation initiation factor 3 (eIF-3) complex.

It localises to the cytoplasm. Its function is as follows. mRNA cap-binding component of the eukaryotic translation initiation factor 3 (eIF-3) complex, which is involved in protein synthesis of a specialized repertoire of mRNAs and, together with other initiation factors, stimulates binding of mRNA and methionyl-tRNAi to the 40S ribosome. The eIF-3 complex specifically targets and initiates translation of a subset of mRNAs involved in cell proliferation. In the eIF-3 complex, eif3d specifically recognizes and binds the 7-methylguanosine cap of a subset of mRNAs. This Sclerotinia sclerotiorum (strain ATCC 18683 / 1980 / Ss-1) (White mold) protein is Eukaryotic translation initiation factor 3 subunit D.